The sequence spans 595 residues: Actin-histidine N-methyltransferase (595 aa).

Positions 1 to 22 (MGKKSRVKTQKSGTGATATVSP) are disordered. Residues 10–20 (QKSGTGATATV) show a composition bias toward polar residues. S-adenosyl-L-methionine contacts are provided by residues R75, 104–106 (EGF), R254, 275–279 (DMCNH), and 325–327 (SGF). Residues 94–314 (EGFEMVNFKE…AGEQIYIFYG (221 aa)) form the SET domain. The residue at position 513 (S513) is a Phosphoserine. Residues 549 to 563 (ENGLVNGENSIPNGT) show a composition bias toward polar residues. Positions 549–595 (ENGLVNGENSIPNGTRSEDENLNQEESKRAVEDAKGSSSDRADAVKE) are disordered. The segment covering 573-595 (EESKRAVEDAKGSSSDRADAVKE) has biased composition (basic and acidic residues).

Belongs to the class V-like SAM-binding methyltransferase superfamily. SETD3 actin-histidine methyltransferase family. Interacts with MYOD1. Phosphorylated by GSK3B, which is required for recognition by the SCF(FBXW7) complex and subsequent degradation. In terms of processing, ubiquitinated by the SCF(FBXW7) complex following phosphorylation by GSK3B, leading to its degradation by the proteasome.

The protein resides in the cytoplasm. The protein localises to the nucleus. It catalyses the reaction L-histidyl-[protein] + S-adenosyl-L-methionine = N(tele)-methyl-L-histidyl-[protein] + S-adenosyl-L-homocysteine + H(+). In terms of biological role, protein-histidine N-methyltransferase that specifically mediates 3-methylhistidine (tele-methylhistidine) methylation of actin at 'His-73'. Histidine methylation of actin is required for smooth muscle contraction of the laboring uterus during delivery. Does not have protein-lysine N-methyltransferase activity and probably only catalyzes histidine methylation of actin. The protein is Actin-histidine N-methyltransferase of Callithrix jacchus (White-tufted-ear marmoset).